The sequence spans 253 residues: Imidazole glycerol phosphate synthase subunit HisF (253 aa).

Catalysis depends on residues D11 and D130.

Belongs to the HisA/HisF family. Heterodimer of HisH and HisF.

It localises to the cytoplasm. The catalysed reaction is 5-[(5-phospho-1-deoxy-D-ribulos-1-ylimino)methylamino]-1-(5-phospho-beta-D-ribosyl)imidazole-4-carboxamide + L-glutamine = D-erythro-1-(imidazol-4-yl)glycerol 3-phosphate + 5-amino-1-(5-phospho-beta-D-ribosyl)imidazole-4-carboxamide + L-glutamate + H(+). Its pathway is amino-acid biosynthesis; L-histidine biosynthesis; L-histidine from 5-phospho-alpha-D-ribose 1-diphosphate: step 5/9. Its function is as follows. IGPS catalyzes the conversion of PRFAR and glutamine to IGP, AICAR and glutamate. The HisF subunit catalyzes the cyclization activity that produces IGP and AICAR from PRFAR using the ammonia provided by the HisH subunit. This chain is Imidazole glycerol phosphate synthase subunit HisF, found in Acidobacterium capsulatum (strain ATCC 51196 / DSM 11244 / BCRC 80197 / JCM 7670 / NBRC 15755 / NCIMB 13165 / 161).